A 1755-amino-acid polypeptide reads, in one-letter code: Transposon Ty1-NL1 Gag-Pol polyprotein (1755 aa).

Polar residues-rich tracts occupy residues 1–23 (MESQ…SVTS), 48–60 (TKAN…TPAS), 71–86 (SPQT…GPYQ), and 131–152 (PQYP…GNTF). 3 disordered regions span residues 1–86 (MESQ…GPYQ), 131–171 (PQYP…YVRP), and 350–420 (QQES…IRGS). The segment covering 153–165 (TDSSSADSDMTST) has biased composition (low complexity). The segment at 299–401 (NNGIPINNKV…NSQSRTARAH (103 aa)) is RNA-binding. A compositionally biased stretch (basic and acidic residues) spans 363-372 (NPSDEKKDSR). The segment covering 373–412 (TYTNTTKPKSITRNSQKPNNSQSRTARAHNVSTSNNSSGP) has biased composition (polar residues). Asp461 functions as the For protease activity; shared with dimeric partner in the catalytic mechanism. The tract at residues 583–640 (NVHTSESTRKYPYPFIHRMLAHANAQTIRYSLKNNTITYFNESDVDWSSAIDYQCPDC) is integrase-type zinc finger-like. Residues 660–835 (NSYEPFQYLH…AGLDISTLLP (176 aa)) form the Integrase catalytic domain. 2 residues coordinate Mg(2+): Asp671 and Asp736. Disordered regions lie at residues 956–1120 (SKAV…TCPK) and 1146–1172 (DSFK…SNAY). A compositionally biased stretch (low complexity) spans 960 to 969 (SPTDSTPPST). The span at 1005–1015 (STPQISDIEST) shows a compositional bias: polar residues. A compositionally biased stretch (basic and acidic residues) spans 1038-1053 (ESSHTSKSKDFRHSDS). 2 stretches are compositionally biased toward polar residues: residues 1054–1082 (YSDN…QTSE) and 1095–1106 (SIDTSSSESNSL). Positions 1178–1212 (KKRSLEDNETEIKVSRDTWNTKNMRSLEPPRSKKR) match the Bipartite nuclear localization signal motif. The 139-residue stretch at 1338–1476 (NNYYITQLDI…DILGLEIKYQ (139 aa)) folds into the Reverse transcriptase Ty1/copia-type domain. Mg(2+) is bound by residues Asp1346, Asp1427, Asp1428, Asp1610, Glu1652, and Asp1685. The 143-residue stretch at 1610 to 1752 (DASYGNQPYY…IKTFKLLTNK (143 aa)) folds into the RNase H Ty1/copia-type domain.

As to quaternary structure, the capsid protein forms a homotrimer, from which the VLPs are assembled. The protease is a homodimer, whose active site consists of two apposed aspartic acid residues. Initially, virus-like particles (VLPs) are composed of the structural unprocessed proteins Gag and Gag-Pol, and also contain the host initiator methionine tRNA (tRNA(i)-Met) which serves as a primer for minus-strand DNA synthesis, and a dimer of genomic Ty RNA. Processing of the polyproteins occurs within the particle and proceeds by an ordered pathway, called maturation. First, the protease (PR) is released by autocatalytic cleavage of the Gag-Pol polyprotein yielding capsid protein p45 and a Pol-p154 precursor protein. This cleavage is a prerequisite for subsequent processing of Pol-p154 at the remaining sites to release the mature structural and catalytic proteins. Maturation takes place prior to the RT reaction and is required to produce transposition-competent VLPs.

It localises to the cytoplasm. It is found in the nucleus. The catalysed reaction is DNA(n) + a 2'-deoxyribonucleoside 5'-triphosphate = DNA(n+1) + diphosphate. It carries out the reaction Endonucleolytic cleavage to 5'-phosphomonoester.. Capsid protein (CA) is the structural component of the virus-like particle (VLP), forming the shell that encapsulates the retrotransposons dimeric RNA genome. The particles are assembled from trimer-clustered units and there are holes in the capsid shells that allow for the diffusion of macromolecules. CA also has nucleocapsid-like chaperone activity, promoting primer tRNA(i)-Met annealing to the multipartite primer-binding site (PBS), dimerization of Ty1 RNA and initiation of reverse transcription. Its function is as follows. The aspartyl protease (PR) mediates the proteolytic cleavages of the Gag and Gag-Pol polyproteins after assembly of the VLP. In terms of biological role, reverse transcriptase/ribonuclease H (RT) is a multifunctional enzyme that catalyzes the conversion of the retro-elements RNA genome into dsDNA within the VLP. The enzyme displays a DNA polymerase activity that can copy either DNA or RNA templates, and a ribonuclease H (RNase H) activity that cleaves the RNA strand of RNA-DNA heteroduplexes during plus-strand synthesis and hydrolyzes RNA primers. The conversion leads to a linear dsDNA copy of the retrotransposon that includes long terminal repeats (LTRs) at both ends. Functionally, integrase (IN) targets the VLP to the nucleus, where a subparticle preintegration complex (PIC) containing at least integrase and the newly synthesized dsDNA copy of the retrotransposon must transit the nuclear membrane. Once in the nucleus, integrase performs the integration of the dsDNA into the host genome. The protein is Transposon Ty1-NL1 Gag-Pol polyprotein (TY1B-NL1) of Saccharomyces cerevisiae (strain ATCC 204508 / S288c) (Baker's yeast).